The primary structure comprises 227 residues: uncharacterized protein (227 aa).

A run of 2 helical transmembrane segments spans residues 13-35 (CVRA…FAFS) and 155-177 (IFFR…MVFL). Residues 192-227 (GDARPRPAGPQGTARSRTDEAQVSPGTPPECPVSVF) form a disordered region. Residues 217–227 (GTPPECPVSVF) show a composition bias toward pro residues.

The protein resides in the cell membrane. This is an uncharacterized protein from Treponema pallidum (strain Nichols).